The primary structure comprises 1386 residues: DNA-directed RNA polymerase subunit beta'' (1386 aa).

Residues C224, C294, C301, and C304 each contribute to the Zn(2+) site.

The protein belongs to the RNA polymerase beta' chain family. RpoC2 subfamily. As to quaternary structure, in plastids the minimal PEP RNA polymerase catalytic core is composed of four subunits: alpha, beta, beta', and beta''. When a (nuclear-encoded) sigma factor is associated with the core the holoenzyme is formed, which can initiate transcription. It depends on Zn(2+) as a cofactor.

It is found in the plastid. Its subcellular location is the chloroplast. The catalysed reaction is RNA(n) + a ribonucleoside 5'-triphosphate = RNA(n+1) + diphosphate. In terms of biological role, DNA-dependent RNA polymerase catalyzes the transcription of DNA into RNA using the four ribonucleoside triphosphates as substrates. The polypeptide is DNA-directed RNA polymerase subunit beta'' (Acorus calamus (Sweet flag)).